The following is a 954-amino-acid chain: Leucine--tRNA ligase (954 aa).

A 'HIGH' region motif is present at residues 67 to 78; the sequence is PYPSGAGLHVGH. Residues 729–733 carry the 'KMSKS' region motif; the sequence is KMGKS. ATP is bound at residue Lys732.

Belongs to the class-I aminoacyl-tRNA synthetase family.

The protein resides in the cytoplasm. The enzyme catalyses tRNA(Leu) + L-leucine + ATP = L-leucyl-tRNA(Leu) + AMP + diphosphate. The chain is Leucine--tRNA ligase from Salinispora tropica (strain ATCC BAA-916 / DSM 44818 / JCM 13857 / NBRC 105044 / CNB-440).